A 403-amino-acid polypeptide reads, in one-letter code: Probable tubulin--tyrosine ligase C12B10.04 (403 aa).

In terms of domain architecture, TTL spans 9–386 (KVYVNYRDEY…PFFESSTKRN (378 aa)).

This sequence belongs to the tubulin--tyrosine ligase family. Requires Mg(2+) as cofactor. The cofactor is K(+).

It localises to the cytoplasm. The protein localises to the nucleus. It carries out the reaction C-terminal L-alpha-aminoacyl-L-glutamyl-L-glutamyl-[tubulin] + L-tyrosine + ATP = C-terminal L-alpha-aminoacyl-L-glutamyl-L-glutamyl-L-tyrosyl-[tubulin] + ADP + phosphate + H(+). In terms of biological role, probable tubulin--tyrosine ligase. This chain is Probable tubulin--tyrosine ligase C12B10.04, found in Schizosaccharomyces pombe (strain 972 / ATCC 24843) (Fission yeast).